Here is a 173-residue protein sequence, read N- to C-terminus: Monothiol glutaredoxin-S14, chloroplastic (173 aa).

Residues 1-63 (MALRSVKTPT…KLKPTKFRCS (63 aa)) constitute a chloroplast transit peptide. The 102-residue stretch at 72-173 (KDTLEKLVNS…QEEVEKAMCS (102 aa)) folds into the Glutaredoxin domain. Lysine 89 is a binding site for glutathione. [2Fe-2S] cluster-binding residues include cysteine 97 and phenylalanine 99. Cysteine 97 bears the S-glutathionyl cysteine mark. The interval 97-100 (CGFS) is required for CAX1 activation. Arginine 126 and lysine 130 together coordinate glutathione. The interval 133-137 (SNWPT) is required for CAX1 activation. Glutathione contacts are provided by residues phenylalanine 138 and 151 to 152 (CD).

The protein belongs to the glutaredoxin family. CGFS subfamily. As to quaternary structure, [2Fe-2S]-bridged holo-homodimer. Interacts with N-terminal part of CAX1 in yeast. Interacts in vitro with SUFE1, BOLA1, BOLA2 and BOLA4. Interacts in vivo only with SUFE1, BOLA1 and BOLA4. Interacts with SBP1. In terms of tissue distribution, highly expressed in leaves, at intermediate levels in stems and at lower levels in roots and flowers.

It is found in the plastid. The protein resides in the chloroplast. Functionally, may only reduce GSH-thiol disulfides, but not protein disulfides (Potential). Probably involved in the regulation of the redox state of the BOLA proteins (Potential). May act as Fe-S cluster donors to Fe-S cluster-requiring proteins. May protect cells against protein oxidative damage. May regulate CAX cation transporters. The GRXS14-BOLA1 heterodimer binds a labile, oxygen sensitive Fe-S cluster. The chain is Monothiol glutaredoxin-S14, chloroplastic from Arabidopsis thaliana (Mouse-ear cress).